Reading from the N-terminus, the 208-residue chain is 3-isopropylmalate dehydratase small subunit (208 aa).

Belongs to the LeuD family. LeuD type 1 subfamily. As to quaternary structure, heterodimer of LeuC and LeuD.

It catalyses the reaction (2R,3S)-3-isopropylmalate = (2S)-2-isopropylmalate. Its pathway is amino-acid biosynthesis; L-leucine biosynthesis; L-leucine from 3-methyl-2-oxobutanoate: step 2/4. In terms of biological role, catalyzes the isomerization between 2-isopropylmalate and 3-isopropylmalate, via the formation of 2-isopropylmaleate. The protein is 3-isopropylmalate dehydratase small subunit of Gluconobacter oxydans (strain 621H) (Gluconobacter suboxydans).